The chain runs to 378 residues: Erythronate-4-phosphate dehydrogenase (378 aa).

The substrate site is built by S45 and T66. 2 residues coordinate NAD(+): D146 and T175. The active site involves R208. D232 is a binding site for NAD(+). E237 is an active-site residue. The Proton donor role is filled by H254. G257 serves as a coordination point for NAD(+). A substrate-binding site is contributed by Y258.

Belongs to the D-isomer specific 2-hydroxyacid dehydrogenase family. PdxB subfamily. Homodimer.

It localises to the cytoplasm. It catalyses the reaction 4-phospho-D-erythronate + NAD(+) = (R)-3-hydroxy-2-oxo-4-phosphooxybutanoate + NADH + H(+). Its pathway is cofactor biosynthesis; pyridoxine 5'-phosphate biosynthesis; pyridoxine 5'-phosphate from D-erythrose 4-phosphate: step 2/5. Its function is as follows. Catalyzes the oxidation of erythronate-4-phosphate to 3-hydroxy-2-oxo-4-phosphonooxybutanoate. In Escherichia coli O17:K52:H18 (strain UMN026 / ExPEC), this protein is Erythronate-4-phosphate dehydrogenase.